A 221-amino-acid chain; its full sequence is PKHD-type hydroxylase PMT_0286 (221 aa).

Residues 80–174 form the Fe2OG dioxygenase domain; that stretch reads HIHGVMFSRS…RLVCVGWIQS (95 aa). His98, Asp100, and His155 together coordinate Fe cation. Residue Arg165 coordinates 2-oxoglutarate.

The cofactor is Fe(2+). L-ascorbate is required as a cofactor.

This is PKHD-type hydroxylase PMT_0286 from Prochlorococcus marinus (strain MIT 9313).